We begin with the raw amino-acid sequence, 222 residues long: Ribosomal RNA small subunit methyltransferase I (222 aa).

It belongs to the methyltransferase superfamily. RsmI family.

Its subcellular location is the cytoplasm. It carries out the reaction cytidine(1402) in 16S rRNA + S-adenosyl-L-methionine = 2'-O-methylcytidine(1402) in 16S rRNA + S-adenosyl-L-homocysteine + H(+). Its function is as follows. Catalyzes the 2'-O-methylation of the ribose of cytidine 1402 (C1402) in 16S rRNA. This chain is Ribosomal RNA small subunit methyltransferase I, found in Mycoplasmopsis pulmonis (strain UAB CTIP) (Mycoplasma pulmonis).